Reading from the N-terminus, the 398-residue chain is Acetate kinase 1 (398 aa).

Asn10 contacts Mg(2+). Lys17 contacts ATP. Substrate is bound at residue Arg89. Asp146 functions as the Proton donor/acceptor in the catalytic mechanism. ATP-binding positions include 206 to 210, 281 to 283, and 329 to 333; these read HLGNG, DCR, and GIGEN. Mg(2+) is bound at residue Glu384.

It belongs to the acetokinase family. In terms of assembly, homodimer. Mg(2+) serves as cofactor. Requires Mn(2+) as cofactor.

The protein localises to the cytoplasm. It catalyses the reaction acetate + ATP = acetyl phosphate + ADP. The protein operates within metabolic intermediate biosynthesis; acetyl-CoA biosynthesis; acetyl-CoA from acetate: step 1/2. Catalyzes the formation of acetyl phosphate from acetate and ATP. Can also catalyze the reverse reaction. The protein is Acetate kinase 1 of Neisseria meningitidis serogroup A / serotype 4A (strain DSM 15465 / Z2491).